The chain runs to 388 residues: Chorismate synthase (388 aa).

Arg39 and Arg45 together coordinate NADP(+). The tract at residues 95 to 115 (EKQKKIRRVSKPRPGHADLVG) is disordered. Over residues 98–108 (KKIRRVSKPRP) the composition is skewed to basic residues. FMN is bound by residues 130–132 (RSS), 251–252 (NA), Gly296, 311–315 (KPIPT), and Arg337.

Belongs to the chorismate synthase family. In terms of assembly, homotetramer. FMNH2 serves as cofactor.

The enzyme catalyses 5-O-(1-carboxyvinyl)-3-phosphoshikimate = chorismate + phosphate. Its pathway is metabolic intermediate biosynthesis; chorismate biosynthesis; chorismate from D-erythrose 4-phosphate and phosphoenolpyruvate: step 7/7. Its function is as follows. Catalyzes the anti-1,4-elimination of the C-3 phosphate and the C-6 proR hydrogen from 5-enolpyruvylshikimate-3-phosphate (EPSP) to yield chorismate, which is the branch point compound that serves as the starting substrate for the three terminal pathways of aromatic amino acid biosynthesis. This reaction introduces a second double bond into the aromatic ring system. The chain is Chorismate synthase from Enterococcus faecalis (strain ATCC 700802 / V583).